Reading from the N-terminus, the 86-residue chain is Exodeoxyribonuclease 7 small subunit (86 aa).

The segment at 1 to 26 is disordered; sequence MQDELFETEKAPQKNAKNAKNAPKKS.

It belongs to the XseB family. Heterooligomer composed of large and small subunits.

The protein resides in the cytoplasm. It carries out the reaction Exonucleolytic cleavage in either 5'- to 3'- or 3'- to 5'-direction to yield nucleoside 5'-phosphates.. In terms of biological role, bidirectionally degrades single-stranded DNA into large acid-insoluble oligonucleotides, which are then degraded further into small acid-soluble oligonucleotides. The sequence is that of Exodeoxyribonuclease 7 small subunit from Helicobacter pylori (strain J99 / ATCC 700824) (Campylobacter pylori J99).